We begin with the raw amino-acid sequence, 81 residues long: Small ribosomal subunit protein bS18 (81 aa).

This sequence belongs to the bacterial ribosomal protein bS18 family. In terms of assembly, part of the 30S ribosomal subunit. Forms a tight heterodimer with protein bS6.

Functionally, binds as a heterodimer with protein bS6 to the central domain of the 16S rRNA, where it helps stabilize the platform of the 30S subunit. This Chloroflexus aurantiacus (strain ATCC 29366 / DSM 635 / J-10-fl) protein is Small ribosomal subunit protein bS18.